The following is a 307-amino-acid chain: Pantothenate kinase (307 aa).

ATP is bound at residue 90–97 (GSVAVGKS).

It belongs to the prokaryotic pantothenate kinase family.

It is found in the cytoplasm. It carries out the reaction (R)-pantothenate + ATP = (R)-4'-phosphopantothenate + ADP + H(+). The protein operates within cofactor biosynthesis; coenzyme A biosynthesis; CoA from (R)-pantothenate: step 1/5. The protein is Pantothenate kinase of Levilactobacillus brevis (strain ATCC 367 / BCRC 12310 / CIP 105137 / JCM 1170 / LMG 11437 / NCIMB 947 / NCTC 947) (Lactobacillus brevis).